The sequence spans 282 residues: MTISGVLAGCPAPAKLNLFLHVVGRRDDGYHLLQTAFRLLDWGDRLDFRVRDDGLIRRTNQVAGVAEDDDLVVRAARRLQQATGTPLGADITLHKVLPMGGGVGGGSSDAATTLIALNHLWQTGLTRADLQQLGLALGADVPFFIYGRDAFAEGVGEAFQPLALPAAVYVVLSPEVSVPTAEIFSAKGLTRDTPPIRIADFAASPTRNDLQATACSRYPEVARAINWLEHYAPARMTGSGACVFAEVASEIEADEIVSLCPARWKAWKAKSLARHPLYGLLD.

Lys15 is an active-site residue. 98–108 (PMGGGVGGGSS) serves as a coordination point for ATP. Residue Asp140 is part of the active site.

It belongs to the GHMP kinase family. IspE subfamily.

The catalysed reaction is 4-CDP-2-C-methyl-D-erythritol + ATP = 4-CDP-2-C-methyl-D-erythritol 2-phosphate + ADP + H(+). It functions in the pathway isoprenoid biosynthesis; isopentenyl diphosphate biosynthesis via DXP pathway; isopentenyl diphosphate from 1-deoxy-D-xylulose 5-phosphate: step 3/6. Catalyzes the phosphorylation of the position 2 hydroxy group of 4-diphosphocytidyl-2C-methyl-D-erythritol. The polypeptide is 4-diphosphocytidyl-2-C-methyl-D-erythritol kinase (Azoarcus sp. (strain BH72)).